A 427-amino-acid chain; its full sequence is Enolase (427 aa).

A (2R)-2-phosphoglycerate-binding site is contributed by glutamine 163. Glutamate 205 serves as the catalytic Proton donor. Positions 242, 287, and 314 each coordinate Mg(2+). Residues lysine 339, arginine 368, serine 369, and lysine 390 each contribute to the (2R)-2-phosphoglycerate site. Catalysis depends on lysine 339, which acts as the Proton acceptor.

Belongs to the enolase family. The cofactor is Mg(2+).

Its subcellular location is the cytoplasm. It localises to the secreted. It is found in the cell surface. The enzyme catalyses (2R)-2-phosphoglycerate = phosphoenolpyruvate + H2O. It functions in the pathway carbohydrate degradation; glycolysis; pyruvate from D-glyceraldehyde 3-phosphate: step 4/5. In terms of biological role, catalyzes the reversible conversion of 2-phosphoglycerate (2-PG) into phosphoenolpyruvate (PEP). It is essential for the degradation of carbohydrates via glycolysis. This is Enolase from Solibacter usitatus (strain Ellin6076).